The primary structure comprises 490 residues: Mitochondria-eating protein (490 aa).

A coiled-coil region spans residues 112–210 (IRELSSVHES…RILRDEVSFL (99 aa)). Low complexity-rich tracts occupy residues 224-241 (SRSP…SPVR) and 456-490 (RSSS…SSRL). Disordered regions lie at residues 224 to 253 (SRSP…LTSS) and 455 to 490 (SRSS…SSRL).

Belongs to the MIEAP family.

The protein localises to the cytoplasm. It is found in the mitochondrion outer membrane. The protein resides in the mitochondrion matrix. Functionally, key regulator of mitochondrial quality that mediates the repairing or degradation of unhealthy mitochondria in response to mitochondrial damage. Mediator of mitochondrial protein catabolic process (also named MALM) by mediating the degradation of damaged proteins inside mitochondria by promoting the accumulation in the mitochondrial matrix of hydrolases that are characteristic of the lysosomal lumen. Also involved in mitochondrion degradation of damaged mitochondria by promoting the formation of vacuole-like structures (named MIV), which engulf and degrade unhealthy mitochondria by accumulating lysosomes. Binds cardiolipin. May form molecular condensates (non-membrane-bounded organelles) within mitochondria that compartmentalize and promote cardiolipin metabolism. The chain is Mitochondria-eating protein (spata18) from Danio rerio (Zebrafish).